Consider the following 404-residue polypeptide: V-set and immunoglobulin domain-containing protein 1 (404 aa).

The N-terminal stretch at 1–22 (MMVFAFWKVFLILNCLAGQVNM) is a signal peptide. The Ig-like V-type domain occupies 23 to 133 (VQVTIPDTFV…DFFGKNQGIL (111 aa)). The Extracellular portion of the chain corresponds to 23–233 (VQVTIPDTFV…EIDLTSSDPE (211 aa)). Residue Asn39 is glycosylated (N-linked (GlcNAc...) asparagine). Disulfide bonds link Cys44–Cys117 and Cys162–Cys212. In terms of domain architecture, Ig-like C2-type spans 141 to 228 (PSKPFCSIQG…GNSSCEIDLT (88 aa)). Asn201 and Asn220 each carry an N-linked (GlcNAc...) asparagine glycan. Residues 234-254 (VGIIIGALVGALTGAAIIICV) form a helical membrane-spanning segment. Residues 255-404 (VYFARNKVKS…REEEKETVKA (150 aa)) lie on the Cytoplasmic side of the membrane. Disordered regions lie at residues 266–285 (QKNL…HHSR) and 298–404 (EGTL…TVKA). Residues Ser271 and Ser272 each carry the phosphoserine modification. The span at 301–314 (LPSSIHASHNTEPT) shows a compositional bias: polar residues. Acidic residues predominate over residues 357-383 (MELEPETEPEPEPEPEPQPELESELEP). A compositionally biased stretch (basic and acidic residues) spans 393-404 (PMREEEKETVKA).

Its subcellular location is the membrane. This Rattus norvegicus (Rat) protein is V-set and immunoglobulin domain-containing protein 1 (Vsig1).